Reading from the N-terminus, the 327-residue chain is Deoxyribonuclease (327 aa).

The segment at residues 1–24 (MSKKLRNFLVRIIVAAFASFAVMA) is a signal peptide (or 35). The tract at residues 299–327 (DSTTDEIENSVDDSEEIVYNDTTTEEEEN) is disordered.

The enzyme catalyses Endonucleolytic cleavage to 5'-phosphodinucleotide and 5'-phosphooligonucleotide end-products.. Functionally, may have a role in S.equisimilis virulence. The chain is Deoxyribonuclease (sdc) from Streptococcus dysgalactiae subsp. equisimilis (Streptococcus equisimilis).